Reading from the N-terminus, the 140-residue chain is FLYWCH family member 2 (140 aa).

2 disordered regions span residues 1–39 (MPLPEPSEQEGESVKASQEPSPKPGTEVIPAAPRKPRKF) and 84–140 (HPEA…GKSL). S21 bears the Phosphoserine mark. Residues 98 to 114 (PEQKRSRQDPGTDRTED) show a composition bias toward basic and acidic residues. The span at 118–127 (AAGPPEAAGE) shows a compositional bias: low complexity.

This Homo sapiens (Human) protein is FLYWCH family member 2 (FLYWCH2).